The primary structure comprises 78 residues: Acyl carrier protein (78 aa).

Residues 2 to 77 enclose the Carrier domain; the sequence is SDTAERIKKI…DAVSYIDEHK (76 aa). Serine 37 carries the O-(pantetheine 4'-phosphoryl)serine modification.

This sequence belongs to the acyl carrier protein (ACP) family. 4'-phosphopantetheine is transferred from CoA to a specific serine of apo-ACP by AcpS. This modification is essential for activity because fatty acids are bound in thioester linkage to the sulfhydryl of the prosthetic group.

The protein resides in the cytoplasm. It participates in lipid metabolism; fatty acid biosynthesis. In terms of biological role, carrier of the growing fatty acid chain in fatty acid biosynthesis. The chain is Acyl carrier protein from Zymomonas mobilis subsp. mobilis (strain ATCC 31821 / ZM4 / CP4).